The primary structure comprises 278 residues: Biotin synthase (278 aa).

One can recognise a Radical SAM core domain in the interval 1 to 227 (MQIMLCAISN…QSVVMVAGGR (227 aa)). Positions 16, 20, and 23 each coordinate [4Fe-4S] cluster. Cys-60, Cys-95, and Cys-153 together coordinate [2Fe-2S] cluster.

It belongs to the radical SAM superfamily. Biotin synthase family. As to quaternary structure, homodimer. Requires [4Fe-4S] cluster as cofactor. [2Fe-2S] cluster is required as a cofactor.

It catalyses the reaction (4R,5S)-dethiobiotin + (sulfur carrier)-SH + 2 reduced [2Fe-2S]-[ferredoxin] + 2 S-adenosyl-L-methionine = (sulfur carrier)-H + biotin + 2 5'-deoxyadenosine + 2 L-methionine + 2 oxidized [2Fe-2S]-[ferredoxin]. It participates in cofactor biosynthesis; biotin biosynthesis; biotin from 7,8-diaminononanoate: step 2/2. Its function is as follows. Catalyzes the conversion of dethiobiotin (DTB) to biotin by the insertion of a sulfur atom into dethiobiotin via a radical-based mechanism. In Campylobacter jejuni subsp. jejuni serotype O:23/36 (strain 81-176), this protein is Biotin synthase.